Here is a 298-residue protein sequence, read N- to C-terminus: Small ribosomal subunit protein uS3m (298 aa).

This sequence belongs to the universal ribosomal protein uS3 family.

It is found in the mitochondrion. The polypeptide is Small ribosomal subunit protein uS3m (RPS3) (Acanthamoeba castellanii (Amoeba)).